Here is an 83-residue protein sequence, read N- to C-terminus: Short neurotoxin D (83 aa).

A signal peptide spans 1–21 (MKTLLLTLVVVTMVCLDLGYT). 4 cysteine pairs are disulfide-bonded: C24–C45, C38–C62, C64–C75, and C76–C81.

Belongs to the three-finger toxin family. Short-chain subfamily. Type I alpha-neurotoxin sub-subfamily. In terms of tissue distribution, expressed by the venom gland.

It is found in the secreted. In terms of biological role, binds to muscle nicotinic acetylcholine receptor (nAChR) and inhibit acetylcholine from binding to the receptor, thereby impairing neuromuscular transmission. The protein is Short neurotoxin D of Laticauda colubrina (Yellow-lipped sea krait).